The sequence spans 217 residues: Octanoyltransferase (217 aa).

Positions 32–207 (SESHDELWIV…TFSQLLGYQH (176 aa)) constitute a BPL/LPL catalytic domain. Residues 71-78 (RGGQVTYH), 138-140 (SLG), and 151-153 (GLA) each bind substrate. C169 serves as the catalytic Acyl-thioester intermediate.

It belongs to the LipB family.

It is found in the cytoplasm. It carries out the reaction octanoyl-[ACP] + L-lysyl-[protein] = N(6)-octanoyl-L-lysyl-[protein] + holo-[ACP] + H(+). It functions in the pathway protein modification; protein lipoylation via endogenous pathway; protein N(6)-(lipoyl)lysine from octanoyl-[acyl-carrier-protein]: step 1/2. In terms of biological role, catalyzes the transfer of endogenously produced octanoic acid from octanoyl-acyl-carrier-protein onto the lipoyl domains of lipoate-dependent enzymes. Lipoyl-ACP can also act as a substrate although octanoyl-ACP is likely to be the physiological substrate. The polypeptide is Octanoyltransferase (Shewanella baltica (strain OS223)).